The chain runs to 549 residues: Oxygen-dependent choline dehydrogenase (549 aa).

Residue 4 to 33 (DFVIIGSGSAGSALAYRLSEDGRNSVIVLE) coordinates FAD. The active-site Proton acceptor is His-465.

The protein belongs to the GMC oxidoreductase family. The cofactor is FAD.

It localises to the cell membrane. It catalyses the reaction choline + A = betaine aldehyde + AH2. It carries out the reaction betaine aldehyde + NAD(+) + H2O = glycine betaine + NADH + 2 H(+). It participates in amine and polyamine biosynthesis; betaine biosynthesis via choline pathway; betaine aldehyde from choline (cytochrome c reductase route): step 1/1. Its function is as follows. Involved in the biosynthesis of the osmoprotectant glycine betaine. Catalyzes the oxidation of choline to betaine aldehyde and betaine aldehyde to glycine betaine at the same rate. The polypeptide is Oxygen-dependent choline dehydrogenase (Rhizobium meliloti (strain 1021) (Ensifer meliloti)).